The chain runs to 226 residues: UPF0173 metal-dependent hydrolase CTN_1413 (226 aa).

The protein belongs to the UPF0173 family.

The protein is UPF0173 metal-dependent hydrolase CTN_1413 of Thermotoga neapolitana (strain ATCC 49049 / DSM 4359 / NBRC 107923 / NS-E).